The primary structure comprises 132 residues: Agouti-signaling protein (132 aa).

The N-terminal stretch at 1–22 is a signal peptide; that stretch reads MDVTRLLLATLLVFLCFFTAYS. N-linked (GlcNAc...) asparagine glycosylation occurs at Asn39. The interval 62-88 is disordered; that stretch reads ISRKEAEKKRSSKKEASMKKVARPRTP. Basic and acidic residues predominate over residues 63–79; the sequence is SRKEAEKKRSSKKEASM. 5 cysteine pairs are disulfide-bonded: Cys93-Cys108, Cys100-Cys114, Cys107-Cys125, Cys111-Cys132, and Cys116-Cys123. Residues 93–132 form the Agouti domain; it reads CVATRDSCKPPAPACCDPCASCQCRFFRSACSCRVLSLNC.

It localises to the secreted. Its function is as follows. Involved in the regulation of melanogenesis. The binding of ASP to MC1R precludes alpha-MSH initiated signaling and thus blocks production of cAMP, leading to a down-regulation of eumelanogenesis (brown/black pigment) and thus increasing synthesis of pheomelanin (yellow/red pigment). The protein is Agouti-signaling protein (ASIP) of Chlorocebus aethiops (Green monkey).